Consider the following 2628-residue polypeptide: Hemagglutinin A (2628 aa).

A signal peptide spans 1 to 24 (MRKLNSLFSLAVLLSLLCWGQTAA). Peptidase C25-like regions lie at residues 25–539 (AQGG…TPPP), 540–995 (GGTS…TPPP), 996–1451 (GGTS…TPPP), 1452–1907 (GGTS…TPPP), and 2074–2628 (IDAD…LAVK). Disordered stretches follow at residues 493-512 (WDAP…LSES), 520-546 (SWKT…SFAG), 944-1002 (KWDA…SFAG), 1400-1458 (KWDA…SFAG), 1856-1881 (KWDA…SESF), 1890-1909 (KTID…PPGG), and 2336-2358 (SSWK…PPGG). Positions 496-508 (PNGTPNPNPGTTT) are enriched in low complexity.

This sequence belongs to the peptidase C25 family.

Agglutinates erythrocytes. This is Hemagglutinin A (hagA) from Porphyromonas gingivalis (Bacteroides gingivalis).